Consider the following 246-residue polypeptide: Carboxylesterase (246 aa).

Catalysis depends on Ser93, which acts as the Nucleophile. Residues Asp192 and His222 each act as charge relay system in the active site.

This sequence belongs to the lipase/esterase LIP3/BchO family. Homodimer.

The enzyme catalyses a carboxylic ester + H2O = an alcohol + a carboxylate + H(+). In terms of biological role, involved in the detoxification of xenobiotics. Shows maximal activity with C6 substrates, with gradually decreasing activity from C8 to C12 substrates. No activity for higher chain length substrates acids rather than long-chain ones. The sequence is that of Carboxylesterase (est) from Bacillus subtilis (strain 168).